The primary structure comprises 365 residues: MQNLPVTHYSALLAEKQEKLTALLAPFNAPNLQVFASPTQHFRMRAEFRIWHEGDDFYHIMFDQQSKQRYRVDNFPIASELINRMMTALLPLLKQQTVLHHRLFQIDYLSTQSQHIIVSLLYHKALDEDWQAAAQTLRSQLQQQGFNVQIVGRASKQKICLEQDYVDEILRVHGKDYIYRQVENSFTQPNATVNSKMLEWAVDCTRNSHGDLLELYCGNGNFSIALAQNFRKVLATEIAKPSVAAAQFNIAANQINNLQIIRMSAEEFTQAMQGVREFNRLKGIDLKAYECNTIFVDPPRAGLDADTVKLVQQYERILYISCNPHTLCDNLQTLSQTHRIEKAALFDQFPYTEHMEAGVWLVRKG.

5 residues coordinate S-adenosyl-L-methionine: Gln-188, Tyr-216, Asn-221, Glu-237, and Asp-297. Residue Cys-322 is the Nucleophile of the active site. Glu-356 functions as the Proton acceptor in the catalytic mechanism.

The protein belongs to the class I-like SAM-binding methyltransferase superfamily. RNA M5U methyltransferase family. TrmA subfamily.

It catalyses the reaction uridine(54) in tRNA + S-adenosyl-L-methionine = 5-methyluridine(54) in tRNA + S-adenosyl-L-homocysteine + H(+). The enzyme catalyses uridine(341) in tmRNA + S-adenosyl-L-methionine = 5-methyluridine(341) in tmRNA + S-adenosyl-L-homocysteine + H(+). Its function is as follows. Dual-specificity methyltransferase that catalyzes the formation of 5-methyluridine at position 54 (m5U54) in all tRNAs, and that of position 341 (m5U341) in tmRNA (transfer-mRNA). The protein is tRNA/tmRNA (uracil-C(5))-methyltransferase of Aggregatibacter aphrophilus (strain NJ8700) (Haemophilus aphrophilus).